Reading from the N-terminus, the 241-residue chain is Methylthioribulose-1-phosphate dehydratase (241 aa).

Basic and acidic residues predominate over residues 1–12 (MSQEITQKDNND). Positions 1-22 (MSQEITQKDNNDHLVQSSDPDH) are disordered. Position 101 (Cys-101) interacts with substrate. Residues His-118 and His-120 each coordinate Zn(2+). Glu-147 acts as the Proton donor/acceptor in catalysis. His-203 is a binding site for Zn(2+).

This sequence belongs to the aldolase class II family. MtnB subfamily. It depends on Zn(2+) as a cofactor.

Its subcellular location is the cytoplasm. It carries out the reaction 5-(methylsulfanyl)-D-ribulose 1-phosphate = 5-methylsulfanyl-2,3-dioxopentyl phosphate + H2O. Its pathway is amino-acid biosynthesis; L-methionine biosynthesis via salvage pathway; L-methionine from S-methyl-5-thio-alpha-D-ribose 1-phosphate: step 2/6. Its function is as follows. Catalyzes the dehydration of methylthioribulose-1-phosphate (MTRu-1-P) into 2,3-diketo-5-methylthiopentyl-1-phosphate (DK-MTP-1-P). The polypeptide is Methylthioribulose-1-phosphate dehydratase (Aspergillus terreus (strain NIH 2624 / FGSC A1156)).